The following is a 346-amino-acid chain: Biotin synthase (346 aa).

Residues 38-256 (RQVQVSTLLS…IAVARIMMPT (219 aa)) enclose the Radical SAM core domain. 3 residues coordinate [4Fe-4S] cluster: C53, C57, and C60. Residues C97, C128, C188, and R260 each coordinate [2Fe-2S] cluster.

The protein belongs to the radical SAM superfamily. Biotin synthase family. Homodimer. The cofactor is [4Fe-4S] cluster. [2Fe-2S] cluster serves as cofactor.

It carries out the reaction (4R,5S)-dethiobiotin + (sulfur carrier)-SH + 2 reduced [2Fe-2S]-[ferredoxin] + 2 S-adenosyl-L-methionine = (sulfur carrier)-H + biotin + 2 5'-deoxyadenosine + 2 L-methionine + 2 oxidized [2Fe-2S]-[ferredoxin]. Its pathway is cofactor biosynthesis; biotin biosynthesis; biotin from 7,8-diaminononanoate: step 2/2. Catalyzes the conversion of dethiobiotin (DTB) to biotin by the insertion of a sulfur atom into dethiobiotin via a radical-based mechanism. The chain is Biotin synthase from Escherichia coli O157:H7.